We begin with the raw amino-acid sequence, 463 residues long: SCF E3 ubiquitin ligase complex F-box protein pof2 (463 aa).

The 42-residue stretch at Met1 to Val42 folds into the F-box domain. 10 LRR repeats span residues Cys145 to Arg170, Cys171 to Lys196, Asp198 to Val220, Gly225 to Asn247, Glu249 to Leu271, Lys278 to Thr299, Ser304 to Lys326, Cys328 to Leu353, Pro354 to Ser378, and Ser380 to Asn405.

Part of a SCF E3 ubiquitin ligase complex. Interacts with skp1.

It localises to the mitochondrion. Its function is as follows. Involved in substrate recognition in ubiquitin-dependent degradation. This Schizosaccharomyces pombe (strain 972 / ATCC 24843) (Fission yeast) protein is SCF E3 ubiquitin ligase complex F-box protein pof2 (pof2).